The chain runs to 186 residues: Ribosome-recycling factor (186 aa).

This sequence belongs to the RRF family.

It localises to the cytoplasm. Responsible for the release of ribosomes from messenger RNA at the termination of protein biosynthesis. May increase the efficiency of translation by recycling ribosomes from one round of translation to another. The sequence is that of Ribosome-recycling factor from Chlorobium phaeobacteroides (strain BS1).